The chain runs to 310 residues: Protein-L-isoaspartate O-methyltransferase (310 aa).

Disordered regions lie at residues Met-1–Lys-42 and Ser-64–Val-90. Residues Glu-14–Ala-32 show a composition bias toward basic and acidic residues. Residues Ser-64–Ala-81 are compositionally biased toward low complexity. The active site involves Ser-157.

It belongs to the methyltransferase superfamily. L-isoaspartyl/D-aspartyl protein methyltransferase family.

It is found in the cytoplasm. It carries out the reaction [protein]-L-isoaspartate + S-adenosyl-L-methionine = [protein]-L-isoaspartate alpha-methyl ester + S-adenosyl-L-homocysteine. In terms of biological role, catalyzes the methyl esterification of L-isoaspartyl residues in peptides and proteins that result from spontaneous decomposition of normal L-aspartyl and L-asparaginyl residues. It plays a role in the repair and/or degradation of damaged proteins. The sequence is that of Protein-L-isoaspartate O-methyltransferase from Burkholderia lata (strain ATCC 17760 / DSM 23089 / LMG 22485 / NCIMB 9086 / R18194 / 383).